The primary structure comprises 352 residues: tRNA-specific 2-thiouridylase MnmA (352 aa).

Residues 9 to 16 (ALSGGVDS) and M35 contribute to the ATP site. Catalysis depends on C96, which acts as the Nucleophile. An intrachain disulfide couples C96 to C192. G120 is a binding site for ATP. The interval 142-144 (KDQ) is interaction with tRNA. The active-site Cysteine persulfide intermediate is the C192. The interval 299-300 (RY) is interaction with tRNA.

Belongs to the MnmA/TRMU family.

The protein resides in the cytoplasm. The enzyme catalyses S-sulfanyl-L-cysteinyl-[protein] + uridine(34) in tRNA + AH2 + ATP = 2-thiouridine(34) in tRNA + L-cysteinyl-[protein] + A + AMP + diphosphate + H(+). Its function is as follows. Catalyzes the 2-thiolation of uridine at the wobble position (U34) of tRNA, leading to the formation of s(2)U34. The protein is tRNA-specific 2-thiouridylase MnmA of Acidithiobacillus ferrooxidans (strain ATCC 23270 / DSM 14882 / CIP 104768 / NCIMB 8455) (Ferrobacillus ferrooxidans (strain ATCC 23270)).